The sequence spans 318 residues: Transaldolase (318 aa).

Lysine 132 (schiff-base intermediate with substrate) is an active-site residue.

It belongs to the transaldolase family. Type 1 subfamily. In terms of assembly, homodimer.

The protein localises to the cytoplasm. The enzyme catalyses D-sedoheptulose 7-phosphate + D-glyceraldehyde 3-phosphate = D-erythrose 4-phosphate + beta-D-fructose 6-phosphate. The protein operates within carbohydrate degradation; pentose phosphate pathway; D-glyceraldehyde 3-phosphate and beta-D-fructose 6-phosphate from D-ribose 5-phosphate and D-xylulose 5-phosphate (non-oxidative stage): step 2/3. Transaldolase is important for the balance of metabolites in the pentose-phosphate pathway. In Shewanella loihica (strain ATCC BAA-1088 / PV-4), this protein is Transaldolase.